We begin with the raw amino-acid sequence, 496 residues long: Glutamyl-tRNA(Gln) amidotransferase subunit A (496 aa).

Residues Lys75 and Ser150 each act as charge relay system in the active site. Residue Ser174 is the Acyl-ester intermediate of the active site.

This sequence belongs to the amidase family. GatA subfamily. Heterotrimer of A, B and C subunits.

It catalyses the reaction L-glutamyl-tRNA(Gln) + L-glutamine + ATP + H2O = L-glutaminyl-tRNA(Gln) + L-glutamate + ADP + phosphate + H(+). Its function is as follows. Allows the formation of correctly charged Gln-tRNA(Gln) through the transamidation of misacylated Glu-tRNA(Gln) in organisms which lack glutaminyl-tRNA synthetase. The reaction takes place in the presence of glutamine and ATP through an activated gamma-phospho-Glu-tRNA(Gln). The sequence is that of Glutamyl-tRNA(Gln) amidotransferase subunit A from Burkholderia pseudomallei (strain 1106a).